The primary structure comprises 218 residues: Ras-related protein R-Ras (218 aa).

Residues 1–30 are disordered; sequence MSSGAASGTGRGRPRGGGPGPRDPPPGETH. Gly residues predominate over residues 7-20; the sequence is SGTGRGRPRGGGPG. 36–44 lines the GTP pocket; sequence GGGGVGKSA. The short motif at 58–66 is the Effector region element; the sequence is YDPTIEDSY. GTP-binding positions include 83-87, 142-145, and 172-174; these read DTAGQ, NKAD, and SAK. C215 is subject to Cysteine methyl ester. Residue C215 is the site of S-geranylgeranyl cysteine attachment. Residues 216–218 constitute a propeptide, removed in mature form; the sequence is VLL.

This sequence belongs to the small GTPase superfamily. Ras family. As to quaternary structure, interacts with PLCE1. Interacts (active GTP-bound form preferentially) with RGS14. Interacts with OSBPL3. Interacts with ZDHHC19. Post-translationally, S-palmitoylated by ZDHHC19, leading to increased association with membranes and with rafts/caveolae as well as enhanced cell viability.

Its subcellular location is the cell membrane. It catalyses the reaction GTP + H2O = GDP + phosphate + H(+). Functionally, GTP-binding protein with GTPase activity, likely involved in the regulation of MAPK signaling pathway and thereby controlling multiple cellular processes. Regulates the organization of the actin cytoskeleton. With OSPBL3, modulates integrin beta-1 (ITGB1) activity. This is Ras-related protein R-Ras (Rras) from Mus musculus (Mouse).